We begin with the raw amino-acid sequence, 282 residues long: Probable porphobilinogen deaminase (282 aa).

An S-(dipyrrolylmethanemethyl)cysteine modification is found at Cys233.

The protein belongs to the HMBS family. Requires dipyrromethane as cofactor.

The catalysed reaction is 4 porphobilinogen + H2O = hydroxymethylbilane + 4 NH4(+). It functions in the pathway porphyrin-containing compound metabolism; protoporphyrin-IX biosynthesis; coproporphyrinogen-III from 5-aminolevulinate: step 2/4. Tetrapolymerization of the monopyrrole PBG into the hydroxymethylbilane pre-uroporphyrinogen in several discrete steps. The polypeptide is Probable porphobilinogen deaminase (Picrophilus torridus (strain ATCC 700027 / DSM 9790 / JCM 10055 / NBRC 100828 / KAW 2/3)).